The primary structure comprises 707 residues: Matrix metalloproteinase-9 (707 aa).

Residues 1–19 (MSPRQPLVLALLVLGCCSA) form the signal peptide. Residues 20–106 (APRRRQPTLV…PRCGVPDVGK (87 aa)) constitute a propeptide, activation peptide. The N-linked (GlcNAc...) asparagine glycan is linked to N88. The Cysteine switch signature appears at 97–104 (PRCGVPDV). A Zn(2+)-binding site is contributed by C99. N-linked (GlcNAc...) asparagine glycosylation is found at N120 and N127. Ca(2+) contacts are provided by D131 and D165. Zn(2+) is bound by residues H175 and D177. Ca(2+) contacts are provided by D182, G183, D185, and L187. H190 is a Zn(2+) binding site. 3 residues coordinate Ca(2+): G197, Q199, and D201. H203 contacts Zn(2+). Ca(2+) is bound by residues D205, D206, and E208. Fibronectin type-II domains are found at residues 225-273 (ADGA…FCPS), 283-331 (ADGK…FCPT), and 342-390 (SAGE…FCPD). 6 disulfide bridges follow: C230-C256, C244-C271, C288-C314, C302-C329, C347-C373, and C361-C388. H401 provides a ligand contact to Zn(2+). E402 is a catalytic residue. Zn(2+) contacts are provided by H405 and H411. Residues 437–508 (RGIQHLYGPN…ASPSAAPTAS (72 aa)) are disordered. The segment covering 446-467 (NPNPQPPATTTPEPQPTAPPTA) has biased composition (pro residues). Residues 481–493 (PTTSPTGAPSAGP) show a composition bias toward low complexity. C516 and C704 are disulfide-bonded. Hemopexin repeat units lie at residues 518–563 (VNVF…WPAL), 564–608 (PAKL…GLGP), 610–657 (VPHV…FPGV), and 658–704 (PLNT…ILHC).

It belongs to the peptidase M10A family. In terms of assembly, exists as monomer or homodimer; disulfide-linked. Also exists as heterodimer with LCN2. Macrophages and transformed cell lines produce only the monomeric form. Interacts with ECM1. It depends on Zn(2+) as a cofactor. Ca(2+) is required as a cofactor. N- and O-glycosylated. As to expression, osteoclasts.

The protein localises to the secreted. It is found in the extracellular space. It localises to the extracellular matrix. The enzyme catalyses Cleavage of gelatin types I and V and collagen types IV and V.. In terms of biological role, matrix metalloproteinase that plays an essential role in local proteolysis of the extracellular matrix and in leukocyte migration. Could play a role in bone osteoclastic resorption. Cleaves KiSS1 at a Gly-|-Leu bond. Cleaves NINJ1 to generate the Secreted ninjurin-1 form. Cleaves type IV and type V collagen into large C-terminal three quarter fragments and shorter N-terminal one quarter fragments. Degrades fibronectin but not laminin or Pz-peptide. The polypeptide is Matrix metalloproteinase-9 (Oryctolagus cuniculus (Rabbit)).